Here is a 247-residue protein sequence, read N- to C-terminus: Small ribosomal subunit protein uS3 (247 aa).

The KH type-2 domain occupies 39–109 (IRSMIRSFPE…KVQIKVKEIK (71 aa)). Residues 224 to 247 (RSRRESGQKSDELVRDERTHAERG) form a disordered region. A compositionally biased stretch (basic and acidic residues) spans 227-247 (RESGQKSDELVRDERTHAERG).

This sequence belongs to the universal ribosomal protein uS3 family. Part of the 30S ribosomal subunit. Forms a tight complex with proteins S10 and S14.

Functionally, binds the lower part of the 30S subunit head. Binds mRNA in the 70S ribosome, positioning it for translation. This chain is Small ribosomal subunit protein uS3, found in Treponema pallidum (strain Nichols).